Consider the following 80-residue polypeptide: Conotoxin Ca11.3 (80 aa).

Residues 1-19 (MKLVLAIVVILMLLSLSTG) form the signal peptide. The propeptide occupies 20–42 (AEMSDNHASRSATALRDRLLSPK). Disulfide bonds link cysteine 46-cysteine 60, cysteine 53-cysteine 65, cysteine 59-cysteine 72, and cysteine 64-cysteine 79.

Belongs to the conotoxin I3 superfamily. In terms of tissue distribution, expressed by the venom duct.

It is found in the secreted. This chain is Conotoxin Ca11.3, found in Conus caracteristicus (Characteristic cone).